The sequence spans 534 residues: uncharacterized protein (534 aa).

The next 2 helical transmembrane spans lie at 149–169 (ILTT…SITI) and 185–205 (VFLV…SLIF).

It is found in the cell membrane. This is an uncharacterized protein from Mycoplasma pneumoniae (strain ATCC 29342 / M129 / Subtype 1) (Mycoplasmoides pneumoniae).